A 278-amino-acid polypeptide reads, in one-letter code: Cell division protein FtsQ (278 aa).

The Cytoplasmic portion of the chain corresponds to 1–6; that stretch reads MNATLR. A helical membrane pass occupies residues 7–27; the sequence is ILAWLIAVALVALPVVAVLNG. The Periplasmic segment spans residues 28 to 278; it reads WVGAERWPLA…SPFAIPGFKT (251 aa). A POTRA domain is found at 34-103; it reads WPLARLRVSG…DVLEVHVVEH (70 aa).

This sequence belongs to the FtsQ/DivIB family. FtsQ subfamily. In terms of assembly, part of a complex composed of FtsB, FtsL and FtsQ.

The protein resides in the cell inner membrane. Essential cell division protein. May link together the upstream cell division proteins, which are predominantly cytoplasmic, with the downstream cell division proteins, which are predominantly periplasmic. May control correct divisome assembly. The protein is Cell division protein FtsQ of Xanthomonas campestris pv. campestris (strain ATCC 33913 / DSM 3586 / NCPPB 528 / LMG 568 / P 25).